Consider the following 192-residue polypeptide: Cytochrome c4 (192 aa).

Cytochrome c domains lie at 12–90 and 99–191; these read GDPQ…ATQP and ELAS…QGLS. Heme c is bound by residues Cys25, Cys28, His29, Cys120, Cys123, and His124.

Binds 2 heme c groups covalently per subunit.

The protein resides in the periplasm. In terms of biological role, diheme, high potential cytochrome c believed to be an intermediate electron donor in an anaerobic electron transport chain. This Thiocapsa roseopersicina protein is Cytochrome c4.